The chain runs to 275 residues: NAD kinase (275 aa).

The Proton acceptor role is filled by aspartate 66. NAD(+) is bound by residues 66–67 (DG), 138–139 (NE), histidine 168, aspartate 170, 181–186 (TAYNLS), and valine 205.

The protein belongs to the NAD kinase family. It depends on a divalent metal cation as a cofactor.

The protein localises to the cytoplasm. The enzyme catalyses NAD(+) + ATP = ADP + NADP(+) + H(+). Functionally, involved in the regulation of the intracellular balance of NAD and NADP, and is a key enzyme in the biosynthesis of NADP. Catalyzes specifically the phosphorylation on 2'-hydroxyl of the adenosine moiety of NAD to yield NADP. This chain is NAD kinase, found in Halorubrum lacusprofundi (strain ATCC 49239 / DSM 5036 / JCM 8891 / ACAM 34).